Reading from the N-terminus, the 236-residue chain is Leucyl/phenylalanyl-tRNA--protein transferase (236 aa).

Belongs to the L/F-transferase family.

Its subcellular location is the cytoplasm. The catalysed reaction is N-terminal L-lysyl-[protein] + L-leucyl-tRNA(Leu) = N-terminal L-leucyl-L-lysyl-[protein] + tRNA(Leu) + H(+). It carries out the reaction N-terminal L-arginyl-[protein] + L-leucyl-tRNA(Leu) = N-terminal L-leucyl-L-arginyl-[protein] + tRNA(Leu) + H(+). It catalyses the reaction L-phenylalanyl-tRNA(Phe) + an N-terminal L-alpha-aminoacyl-[protein] = an N-terminal L-phenylalanyl-L-alpha-aminoacyl-[protein] + tRNA(Phe). Functions in the N-end rule pathway of protein degradation where it conjugates Leu, Phe and, less efficiently, Met from aminoacyl-tRNAs to the N-termini of proteins containing an N-terminal arginine or lysine. The sequence is that of Leucyl/phenylalanyl-tRNA--protein transferase from Shewanella oneidensis (strain ATCC 700550 / JCM 31522 / CIP 106686 / LMG 19005 / NCIMB 14063 / MR-1).